Reading from the N-terminus, the 104-residue chain is COX assembly mitochondrial protein 1 (104 aa).

Residues 10 to 52 form the CHCH domain; it reads QKQCADLIRALEECHKSFGKFFGECNTIKYELKACLTKDRNDK. 2 consecutive short sequence motifs (cx9C motif) follow at residues 13–23 and 34–44; these read CADLIRALEEC and CNTIKYELKAC. 2 cysteine pairs are disulfide-bonded: Cys-13-Cys-44 and Cys-23-Cys-34.

This sequence belongs to the CMC family.

It localises to the mitochondrion inner membrane. Required for mitochondrial cytochrome c oxidase (COX) assembly and respiration. The protein is COX assembly mitochondrial protein 1 (cmc1) of Schizosaccharomyces pombe (strain 972 / ATCC 24843) (Fission yeast).